A 519-amino-acid chain; its full sequence is Probable cytosol aminopeptidase (519 aa).

K283 and D288 together coordinate Mn(2+). K295 is an active-site residue. The Mn(2+) site is built by D306, D365, and E367. The active site involves R369.

This sequence belongs to the peptidase M17 family. Mn(2+) is required as a cofactor.

The protein localises to the cytoplasm. It catalyses the reaction Release of an N-terminal amino acid, Xaa-|-Yaa-, in which Xaa is preferably Leu, but may be other amino acids including Pro although not Arg or Lys, and Yaa may be Pro. Amino acid amides and methyl esters are also readily hydrolyzed, but rates on arylamides are exceedingly low.. The catalysed reaction is Release of an N-terminal amino acid, preferentially leucine, but not glutamic or aspartic acids.. Presumably involved in the processing and regular turnover of intracellular proteins. Catalyzes the removal of unsubstituted N-terminal amino acids from various peptides. The protein is Probable cytosol aminopeptidase of Mycobacterium ulcerans (strain Agy99).